The primary structure comprises 522 residues: 56 kDa type-specific antigen (522 aa).

The signal sequence occupies residues 1 to 22 (MKKIMLIASAMSALSLPFSASA). The helical transmembrane segment at 67–87 (LTTMLPFGGTLAAGMTIAPGF) threads the bilayer. The interval 385–417 (AQEEGDDQSQVSCNDKKQQAVAEDSKAGSSKEG) is disordered. Over residues 398–417 (NDKKQQAVAEDSKAGSSKEG) the composition is skewed to basic and acidic residues. A helical membrane pass occupies residues 470–490 (IGVVASGVLGVAINVADGVCV).

Its subcellular location is the cell membrane. In terms of biological role, may be an adherent factor for rickettsial adsorption to the host-cell surface and a determinant of virulence of individual rickettsial strain. It is the major outer membrane protein. The polypeptide is 56 kDa type-specific antigen (Orientia tsutsugamushi (Rickettsia tsutsugamushi)).